We begin with the raw amino-acid sequence, 82 residues long: RNA-binding protein TTE2299 (82 aa).

The protein belongs to the eukaryotic ribosomal protein eL8 family.

This chain is RNA-binding protein TTE2299, found in Caldanaerobacter subterraneus subsp. tengcongensis (strain DSM 15242 / JCM 11007 / NBRC 100824 / MB4) (Thermoanaerobacter tengcongensis).